Consider the following 142-residue polypeptide: Virulence-associated membrane protein 1 (142 aa).

An N-terminal signal peptide occupies residues 1–20 (MRGILVALTAALIFCSLTPA). Residues 59–79 (IAIAVGTALVTLVSAGVGGML) form a helical membrane-spanning segment.

As to quaternary structure, monomer.

It is found in the membrane. Functionally, during infection, may play a role in establishing and maintaining biotrophy; the formation of a tight interaction zone between the host and the pathogen. The chain is Virulence-associated membrane protein 1 from Mycosarcoma maydis (Corn smut fungus).